The sequence spans 387 residues: Eukaryotic translation initiation factor 3 subunit M (387 aa).

One can recognise a PCI domain in the interval 181-340 (LSSKVMIELL…HKVHITSTMH (160 aa)).

Belongs to the eIF-3 subunit M family. Component of the eukaryotic translation initiation factor 3 (eIF-3) complex. The eIF-3 complex interacts with pix.

The protein resides in the cytoplasm. It localises to the golgi apparatus. In terms of biological role, component of the eukaryotic translation initiation factor 3 (eIF-3) complex, which is involved in protein synthesis of a specialized repertoire of mRNAs and, together with other initiation factors, stimulates binding of mRNA and methionyl-tRNAi to the 40S ribosome. The eIF-3 complex specifically targets and initiates translation of a subset of mRNAs involved in cell proliferation. This chain is Eukaryotic translation initiation factor 3 subunit M, found in Drosophila erecta (Fruit fly).